The primary structure comprises 480 residues: Uridine/deoxyuridine transporter (480 aa).

14 helical membrane-spanning segments follow: residues 14 to 34, 55 to 75, 93 to 113, 115 to 135, 147 to 167, 174 to 194, 207 to 227, 239 to 259, 280 to 300, 320 to 340, 358 to 378, 382 to 402, 417 to 437, and 449 to 469; these read VGSI…FQLN, SIAL…LFLP, LTMI…LMIG, ILQG…HVKV, ILTS…GWLV, SVFF…SFGT, WTGV…VNAL, WLLA…FWQV, GLLI…NGII, LVTL…SGFL, IIGI…LLLL, FIGI…GIVL, GMFN…PTVL, and ISGI…SFLI.

This sequence belongs to the major facilitator superfamily. EmrB family.

It localises to the cell membrane. In terms of biological role, responsible for the uptake of uridine and deoxyuridine. Not involved in purine nucleoside uptake. The sequence is that of Uridine/deoxyuridine transporter from Lactococcus lactis subsp. cremoris (strain MG1363).